Consider the following 37-residue polypeptide: Photosystem II reaction center protein M (37 aa).

The chain crosses the membrane as a helical span at residues 7 to 27 (GFIAVLMFLAIPTAFLLIPYV).

The protein belongs to the PsbM family. As to quaternary structure, PSII is composed of 1 copy each of membrane proteins PsbA, PsbB, PsbC, PsbD, PsbE, PsbF, PsbH, PsbI, PsbJ, PsbK, PsbL, PsbM, PsbT, PsbX, PsbY, PsbZ, Psb30/Ycf12, at least 3 peripheral proteins of the oxygen-evolving complex and a large number of cofactors. It forms dimeric complexes.

Its subcellular location is the plastid. The protein resides in the chloroplast thylakoid membrane. Functionally, one of the components of the core complex of photosystem II (PSII). PSII is a light-driven water:plastoquinone oxidoreductase that uses light energy to abstract electrons from H(2)O, generating O(2) and a proton gradient subsequently used for ATP formation. It consists of a core antenna complex that captures photons, and an electron transfer chain that converts photonic excitation into a charge separation. This subunit is found at the monomer-monomer interface. The sequence is that of Photosystem II reaction center protein M from Pinus koraiensis (Korean pine).